The sequence spans 497 residues: Bifunctional protein GlmU (497 aa).

Residues 1-241 (MSPETIGPAA…RWQVEGANDR (241 aa)) form a pyrophosphorylase region. UDP-N-acetyl-alpha-D-glucosamine contacts are provided by residues 14–17 (LAAG), lysine 28, glutamine 81, 86–87 (GT), 112–114 (YGD), glycine 151, glutamate 166, asparagine 181, and asparagine 239. Aspartate 114 serves as a coordination point for Mg(2+). Asparagine 239 lines the Mg(2+) pocket. Residues 242–262 (IQLSALAAEHNRRIIESWMRA) form a linker region. The tract at residues 263-497 (GVTVVDPATT…QATIEEGKQA (235 aa)) is N-acetyltransferase. UDP-N-acetyl-alpha-D-glucosamine contacts are provided by arginine 344 and lysine 362. Histidine 374 acts as the Proton acceptor in catalysis. UDP-N-acetyl-alpha-D-glucosamine-binding residues include tyrosine 377 and asparagine 388. Acetyl-CoA is bound by residues 397–398 (NY), serine 416, and alanine 434.

The protein in the N-terminal section; belongs to the N-acetylglucosamine-1-phosphate uridyltransferase family. It in the C-terminal section; belongs to the transferase hexapeptide repeat family. As to quaternary structure, homotrimer. The cofactor is Mg(2+).

It is found in the cytoplasm. It carries out the reaction alpha-D-glucosamine 1-phosphate + acetyl-CoA = N-acetyl-alpha-D-glucosamine 1-phosphate + CoA + H(+). It catalyses the reaction N-acetyl-alpha-D-glucosamine 1-phosphate + UTP + H(+) = UDP-N-acetyl-alpha-D-glucosamine + diphosphate. It functions in the pathway nucleotide-sugar biosynthesis; UDP-N-acetyl-alpha-D-glucosamine biosynthesis; N-acetyl-alpha-D-glucosamine 1-phosphate from alpha-D-glucosamine 6-phosphate (route II): step 2/2. Its pathway is nucleotide-sugar biosynthesis; UDP-N-acetyl-alpha-D-glucosamine biosynthesis; UDP-N-acetyl-alpha-D-glucosamine from N-acetyl-alpha-D-glucosamine 1-phosphate: step 1/1. It participates in bacterial outer membrane biogenesis; LPS lipid A biosynthesis. Its function is as follows. Catalyzes the last two sequential reactions in the de novo biosynthetic pathway for UDP-N-acetylglucosamine (UDP-GlcNAc). The C-terminal domain catalyzes the transfer of acetyl group from acetyl coenzyme A to glucosamine-1-phosphate (GlcN-1-P) to produce N-acetylglucosamine-1-phosphate (GlcNAc-1-P), which is converted into UDP-GlcNAc by the transfer of uridine 5-monophosphate (from uridine 5-triphosphate), a reaction catalyzed by the N-terminal domain. The chain is Bifunctional protein GlmU from Paenarthrobacter aurescens (strain TC1).